A 179-amino-acid polypeptide reads, in one-letter code: Large ribosomal subunit protein uL5 (179 aa).

Belongs to the universal ribosomal protein uL5 family. Part of the 50S ribosomal subunit; part of the 5S rRNA/L5/L18/L25 subcomplex. Contacts the 5S rRNA and the P site tRNA. Forms a bridge to the 30S subunit in the 70S ribosome.

Its function is as follows. This is one of the proteins that bind and probably mediate the attachment of the 5S RNA into the large ribosomal subunit, where it forms part of the central protuberance. In the 70S ribosome it contacts protein S13 of the 30S subunit (bridge B1b), connecting the 2 subunits; this bridge is implicated in subunit movement. Contacts the P site tRNA; the 5S rRNA and some of its associated proteins might help stabilize positioning of ribosome-bound tRNAs. This chain is Large ribosomal subunit protein uL5, found in Shewanella pealeana (strain ATCC 700345 / ANG-SQ1).